A 268-amino-acid chain; its full sequence is Testis-specific serine/threonine-protein kinase 3 (268 aa).

Residues 10–265 (YQLGKTIGEG…IEEVSWHPWL (256 aa)) enclose the Protein kinase domain. ATP-binding positions include 16 to 24 (IGEGTYSKV) and lysine 39. The Proton acceptor role is filled by aspartate 134. Serine 166 is modified (phosphoserine; by autocatalysis). Position 168 is a phosphothreonine; by PDPK1 (threonine 168).

The protein belongs to the protein kinase superfamily. CAMK Ser/Thr protein kinase family. Mg(2+) is required as a cofactor. Requires Mn(2+) as cofactor. Post-translationally, autophosphorylated at Ser-166. Phosphorylation at Thr-168 by PDPK1 activates the serine/threonine protein kinase activity. In terms of tissue distribution, developmentally expressed in testicular germ cells. In adult testis, expression was detected in round and condensing spermatids, but not in meiotic pachytene spermatocytes. Not expressed in brain, ovary, kidney, liver or early embryonic cells.

The protein localises to the cell projection. The protein resides in the cilium. It localises to the flagellum. It catalyses the reaction L-seryl-[protein] + ATP = O-phospho-L-seryl-[protein] + ADP + H(+). The catalysed reaction is L-threonyl-[protein] + ATP = O-phospho-L-threonyl-[protein] + ADP + H(+). With respect to regulation, activated by phosphorylation on Thr-168 by PDPK1. Functionally, serine/threonine protein kinase required for spermatid development and male fertility. In Mus musculus (Mouse), this protein is Testis-specific serine/threonine-protein kinase 3.